A 962-amino-acid polypeptide reads, in one-letter code: Translation initiation factor IF-2 (962 aa).

The segment covering 52 to 77 has biased composition (basic and acidic residues); it reads RSHGQADDSSRKKITLTKRETSEIRQ. Disordered stretches follow at residues 52 to 87 and 121 to 378; these read RSHG…TRTV and AVEE…EPVV. Over residues 78–87 the composition is skewed to polar residues; that stretch reads SDGTGKTRTV. 3 stretches are compositionally biased toward basic and acidic residues: residues 123–183, 197–250, and 267–278; these read EEAR…KAEE, DSSR…EAEA, and PSERKAEEKKAE. Residues 342–355 show a composition bias toward gly residues; it reads TSGGVGGWRGGPRG. In terms of domain architecture, tr-type G spans 462–631; it reads PRPPVVTVMG…LLQAEVLELT (170 aa). A G1 region spans residues 471–478; it reads GHVDHGKT. Residue 471 to 478 coordinates GTP; it reads GHVDHGKT. The segment at 496 to 500 is G2; it reads GITQH. Positions 517–520 are G3; the sequence is DTPG. GTP contacts are provided by residues 517–521 and 571–574; these read DTPGH and NKID. Residues 571–574 form a G4 region; the sequence is NKID. The G5 stretch occupies residues 607 to 609; it reads SAK.

Belongs to the TRAFAC class translation factor GTPase superfamily. Classic translation factor GTPase family. IF-2 subfamily.

The protein resides in the cytoplasm. One of the essential components for the initiation of protein synthesis. Protects formylmethionyl-tRNA from spontaneous hydrolysis and promotes its binding to the 30S ribosomal subunits. Also involved in the hydrolysis of GTP during the formation of the 70S ribosomal complex. This Cupriavidus necator (strain ATCC 17699 / DSM 428 / KCTC 22496 / NCIMB 10442 / H16 / Stanier 337) (Ralstonia eutropha) protein is Translation initiation factor IF-2.